Here is a 101-residue protein sequence, read N- to C-terminus: NAD(P)H-quinone oxidoreductase subunit 4L (101 aa).

The next 3 membrane-spanning stretches (helical) occupy residues 3–23, 30–50, and 64–84; these read LRYFLLLAAALFCIGIYGLIT, VLMSIELLLNAVNLNLMAFSN, and VFVITVAAAEAAVGLAIVLAI.

The protein belongs to the complex I subunit 4L family. As to quaternary structure, NDH-1 can be composed of about 15 different subunits; different subcomplexes with different compositions have been identified which probably have different functions.

It is found in the cellular thylakoid membrane. The enzyme catalyses a plastoquinone + NADH + (n+1) H(+)(in) = a plastoquinol + NAD(+) + n H(+)(out). The catalysed reaction is a plastoquinone + NADPH + (n+1) H(+)(in) = a plastoquinol + NADP(+) + n H(+)(out). Its function is as follows. NDH-1 shuttles electrons from an unknown electron donor, via FMN and iron-sulfur (Fe-S) centers, to quinones in the respiratory and/or the photosynthetic chain. The immediate electron acceptor for the enzyme in this species is believed to be plastoquinone. Couples the redox reaction to proton translocation, and thus conserves the redox energy in a proton gradient. Cyanobacterial NDH-1 also plays a role in inorganic carbon-concentration. The chain is NAD(P)H-quinone oxidoreductase subunit 4L from Nostoc sp. (strain PCC 7120 / SAG 25.82 / UTEX 2576).